The following is a 288-amino-acid chain: L-xylulose reductase (288 aa).

NADP(+)-binding residues include isoleucine 39, asparagine 113, and lysine 147. Serine 181 serves as the catalytic Proton donor. Residues tyrosine 196, lysine 200, isoleucine 228, and threonine 230 each contribute to the NADP(+) site. Tyrosine 196 serves as the catalytic Proton acceptor. The active-site Lowers pKa of active site Tyr is lysine 200.

The protein belongs to the short-chain dehydrogenases/reductases (SDR) family.

The enzyme catalyses xylitol + NADP(+) = L-xylulose + NADPH + H(+). It functions in the pathway carbohydrate degradation; L-arabinose degradation via L-arabinitol; D-xylulose 5-phosphate from L-arabinose (fungal route): step 3/5. In terms of biological role, L-xylulose reductase involved in the catabolism of L-arabinose through an oxidoreductive pathway. Catalyzes the NADPH-dependent reduction of L-xylulose. Is also able to convert D-xylulose, D-ribulose, L-sorbose, and D-fructose to their corresponding polyols. The polypeptide is L-xylulose reductase (Hypocrea jecorina (strain QM6a) (Trichoderma reesei)).